The primary structure comprises 826 residues: Zinc phosphodiesterase ELAC protein 2 (826 aa).

The N-terminal 16 residues, 1–16, are a transit peptide targeting the mitochondrion; sequence MWALCSLLRSAAGRTM. Disordered stretches follow at residues 16–51 and 188–231; these read MSQG…PSGC and EQRR…VSQR. Residues 27 to 38 are compositionally biased toward basic and acidic residues; that stretch reads ARRERPRKDPLR. Residues Ser199, Ser208, Ser212, Ser229, Ser618, and Ser736 each carry the phosphoserine modification. The span at 208 to 224 shows a compositional bias: basic and acidic residues; that stretch reads SPERSSDSESNENEPHL. Residues 798–826 form a disordered region; it reads ELAGGLEDGEPQQKRAHTEEPQAKKVRAQ. Over residues 808–820 the composition is skewed to basic and acidic residues; the sequence is PQQKRAHTEEPQA.

The protein belongs to the RNase Z family. Homodimer. Interacts with PTCD1. Requires Zn(2+) as cofactor. Widely expressed. Highly expressed in heart, placenta, liver, skeletal muscle, kidney, pancreas, testis and ovary. Weakly expressed in brain, lung, spleen, thymus, prostate, small intestine, colon and leukocytes.

Its subcellular location is the mitochondrion. It is found in the mitochondrion matrix. The protein localises to the mitochondrion nucleoid. It localises to the nucleus. The enzyme catalyses Endonucleolytic cleavage of RNA, removing extra 3' nucleotides from tRNA precursor, generating 3' termini of tRNAs. A 3'-hydroxy group is left at the tRNA terminus and a 5'-phosphoryl group is left at the trailer molecule.. Zinc phosphodiesterase, which displays mitochondrial tRNA 3'-processing endonuclease activity. Involved in tRNA maturation, by removing a 3'-trailer from precursor tRNA. Associates with mitochondrial DNA complexes at the nucleoids to initiate RNA processing and ribosome assembly. The sequence is that of Zinc phosphodiesterase ELAC protein 2 (ELAC2) from Homo sapiens (Human).